A 119-amino-acid chain; its full sequence is Non-specific lipid-transfer protein 12 (119 aa).

The N-terminal stretch at 1–24 (MAFTPKIITCLIVLTIYMASPTES) is a signal peptide. 4 cysteine pairs are disulfide-bonded: Cys28-Cys75, Cys38-Cys52, Cys53-Cys98, and Cys73-Cys112.

Belongs to the plant LTP family.

In terms of biological role, plant non-specific lipid-transfer proteins transfer phospholipids as well as galactolipids across membranes. May play a role in wax or cutin deposition in the cell walls of expanding epidermal cells and certain secretory tissues. The chain is Non-specific lipid-transfer protein 12 (LTP12) from Arabidopsis thaliana (Mouse-ear cress).